Consider the following 911-residue polypeptide: Valine--tRNA ligase (911 aa).

Positions 57-67 (PTVSGSLHVGH) match the 'HIGH' region motif. The short motif at 599–603 (KMSKS) is the 'KMSKS' region element. ATP is bound at residue K602. Residues 882 to 911 (EESAAEDAPETEVAVEASELGEPPAKKPKH) are disordered.

Belongs to the class-I aminoacyl-tRNA synthetase family. ValS type 2 subfamily. Monomer.

The protein localises to the cytoplasm. It carries out the reaction tRNA(Val) + L-valine + ATP = L-valyl-tRNA(Val) + AMP + diphosphate. Functionally, catalyzes the attachment of valine to tRNA(Val). As ValRS can inadvertently accommodate and process structurally similar amino acids such as threonine, to avoid such errors, it has a 'posttransfer' editing activity that hydrolyzes mischarged Thr-tRNA(Val) in a tRNA-dependent manner. This Bifidobacterium longum (strain DJO10A) protein is Valine--tRNA ligase.